We begin with the raw amino-acid sequence, 208 residues long: Ubiquitin-conjugating enzyme E2 S (208 aa).

Residues 14-160 (QTIRQVMKEL…ARMMTEIHAQ (147 aa)) form the UBC core domain. Cys-98 serves as the catalytic Glycyl thioester intermediate. The segment at 161-196 (PAKCGAGASDAKDDDGPSTKKHAGVDKKLQDKKKEK) is disordered. Residues 170 to 196 (DAKDDDGPSTKKHAGVDKKLQDKKKEK) show a composition bias toward basic and acidic residues.

Belongs to the ubiquitin-conjugating enzyme family.

The enzyme catalyses S-ubiquitinyl-[E1 ubiquitin-activating enzyme]-L-cysteine + [E2 ubiquitin-conjugating enzyme]-L-cysteine = [E1 ubiquitin-activating enzyme]-L-cysteine + S-ubiquitinyl-[E2 ubiquitin-conjugating enzyme]-L-cysteine.. The protein operates within protein modification; protein ubiquitination. In terms of biological role, catalyzes the covalent attachment of ubiquitin to other proteins. Acts as an essential factor of the anaphase promoting complex/cyclosome (APC/C), a cell cycle-regulated ubiquitin ligase that controls progression through mitosis. Acts by specifically elongating polyubiquitin chains initiated by the E2 enzyme vih/UbcH10 on APC/C substrates, enhancing the degradation of APC/C substrates by the proteasome and promoting mitotic exit. The polypeptide is Ubiquitin-conjugating enzyme E2 S (Drosophila grimshawi (Hawaiian fruit fly)).